A 137-amino-acid polypeptide reads, in one-letter code: Large ribosomal subunit protein uL16 (137 aa).

It belongs to the universal ribosomal protein uL16 family. In terms of assembly, part of the 50S ribosomal subunit.

Binds 23S rRNA and is also seen to make contacts with the A and possibly P site tRNAs. The sequence is that of Large ribosomal subunit protein uL16 from Francisella tularensis subsp. tularensis (strain FSC 198).